A 137-amino-acid chain; its full sequence is Golgin subfamily A member 7 (137 aa).

S-palmitoyl cysteine attachment occurs at residues C69 and C72.

This sequence belongs to the ERF4 family. Interacts with GOLGA3. Interacts with ZDHHC9. Post-translationally, palmitoylated on Cys-69 and Cys-72; which is required for Golgi localization and interaction with GOLGA3.

The protein localises to the golgi apparatus membrane. May be involved in protein transport from Golgi to cell surface. The ZDHHC9-GOLGA7 complex is a palmitoyltransferase specific for HRAS and NRAS. The polypeptide is Golgin subfamily A member 7 (Golga7) (Rattus norvegicus (Rat)).